The chain runs to 397 residues: Arginine biosynthesis bifunctional protein ArgJ (397 aa).

The substrate site is built by Thr-147, Lys-173, Thr-184, Glu-270, Asn-392, and Thr-397. The active-site Nucleophile is the Thr-184.

It belongs to the ArgJ family. Heterotetramer of two alpha and two beta chains.

The protein resides in the cytoplasm. It carries out the reaction N(2)-acetyl-L-ornithine + L-glutamate = N-acetyl-L-glutamate + L-ornithine. It catalyses the reaction L-glutamate + acetyl-CoA = N-acetyl-L-glutamate + CoA + H(+). The protein operates within amino-acid biosynthesis; L-arginine biosynthesis; L-ornithine and N-acetyl-L-glutamate from L-glutamate and N(2)-acetyl-L-ornithine (cyclic): step 1/1. It functions in the pathway amino-acid biosynthesis; L-arginine biosynthesis; N(2)-acetyl-L-ornithine from L-glutamate: step 1/4. In terms of biological role, catalyzes two activities which are involved in the cyclic version of arginine biosynthesis: the synthesis of N-acetylglutamate from glutamate and acetyl-CoA as the acetyl donor, and of ornithine by transacetylation between N(2)-acetylornithine and glutamate. This chain is Arginine biosynthesis bifunctional protein ArgJ, found in Streptococcus thermophilus (strain CNRZ 1066).